We begin with the raw amino-acid sequence, 213 residues long: ATP phosphoribosyltransferase (213 aa).

Belongs to the ATP phosphoribosyltransferase family. Short subfamily. As to quaternary structure, heteromultimer composed of HisG and HisZ subunits.

The protein resides in the cytoplasm. The catalysed reaction is 1-(5-phospho-beta-D-ribosyl)-ATP + diphosphate = 5-phospho-alpha-D-ribose 1-diphosphate + ATP. The protein operates within amino-acid biosynthesis; L-histidine biosynthesis; L-histidine from 5-phospho-alpha-D-ribose 1-diphosphate: step 1/9. In terms of biological role, catalyzes the condensation of ATP and 5-phosphoribose 1-diphosphate to form N'-(5'-phosphoribosyl)-ATP (PR-ATP). Has a crucial role in the pathway because the rate of histidine biosynthesis seems to be controlled primarily by regulation of HisG enzymatic activity. This chain is ATP phosphoribosyltransferase, found in Bacillus licheniformis (strain ATCC 14580 / DSM 13 / JCM 2505 / CCUG 7422 / NBRC 12200 / NCIMB 9375 / NCTC 10341 / NRRL NRS-1264 / Gibson 46).